A 181-amino-acid polypeptide reads, in one-letter code: uncharacterized protein (181 aa).

The protein belongs to the M.jannaschii MJ0150/MJ0739/MJ0745/MJ1460/MJ1642 family.

This is an uncharacterized protein from Methanocaldococcus jannaschii (strain ATCC 43067 / DSM 2661 / JAL-1 / JCM 10045 / NBRC 100440) (Methanococcus jannaschii).